A 579-amino-acid chain; its full sequence is Nuclear receptor subfamily 1 group D member 2 (579 aa).

Residues 1-60 form a required for phosphorylation by CSNK1E and cytoplasmic localization region; it reads MEVNAGGVIAYISSSSSASSPASCHSEGSENSFQSSSSSVPSSPNSSNSDTNGNPKNGDL. The tract at residues 1–99 is modulating; it reads MEVNAGGVIA…HSGVTKFSGM (99 aa). Positions 13–54 are enriched in low complexity; the sequence is SSSSSASSPASCHSEGSENSFQSSSSSVPSSPNSSNSDTNGN. The tract at residues 13-61 is disordered; the sequence is SSSSSASSPASCHSEGSENSFQSSSSSVPSSPNSSNSDTNGNPKNGDLA. Residue S46 is modified to Phosphoserine; by GSK3-beta. The segment at residues 100 to 176 is a DNA-binding region (nuclear receptor); the sequence is VLLCKVCGDV…VGMSRDAVRF (77 aa). 2 consecutive NR C4-type zinc fingers follow at residues 103-123 and 140-164; these read CKVC…CEGC and CLKN…FKKC. N6-acetyllysine; by KAT5 occurs at positions 162 and 163. Positions 222-250 are disordered; the sequence is PAQEQLRPKPQLEQENIKSSSPPSSDFAK. The segment covering 227–237 has biased composition (basic and acidic residues); that stretch reads LRPKPQLEQEN. 2 disulfide bridges follow: C337–C343 and C374–C384. The 211-residue stretch at 369-579 folds into the NR LBD domain; the sequence is KNSYLCNTGG…EELLAFKVHP (211 aa). Positions 384 and 568 each coordinate heme. The interval 397 to 579 is interaction with ZNHIT1; the sequence is SGHEIWEEFS…EELLAFKVHP (183 aa).

It belongs to the nuclear hormone receptor family. NR1 subfamily. Binds DNA as a monomer or a homodimer. Interacts with NCOA5 coactivator, leading to a strong increase of transcription of target genes. Interacts (via N-terminus) with KAT5. Interacts (via C-terminus) with HDAC1. Interacts with ZNHIT1. Interacts with SIAH2. In terms of processing, deacetylated by HDAC1. Acetylation and deacetylation regulate its transcriptional regulatory activity. Under more reducing intracellular redox conditions, Cys-384 is in its heme-bound state, which is optimal for recruitment of the NCOR1/HDAC3 corepressor complex and repression of target genes. When subjected to oxidative stress conditions, Cys-384 undergoes oxidation to form a disulfide bridge with Cys-374, also triggering a ligand switch that results in release of bound heme and derepression of target genes. Post-translationally, ubiquitinated by SIAH2; leading to proteasomal degradation. In terms of processing, phosphorylated by CSNK1E; phosphorylation enhances its cytoplasmic localization. As to expression, widely expressed. Expressed at high levels in the liver, adipose tissue, skeletal muscle and brain. Expression oscillates diurnally in the suprachiasmatic nucleus (SCN) of the hypothalamus as well as in peripheral tissues.

It is found in the nucleus. Its subcellular location is the cytoplasm. The heme-bound form can bind gaseous signaling molecules such as CO and nitric oxide (NO) and NO can reverse its transcriptional repressor activity. In terms of biological role, transcriptional repressor which coordinates circadian rhythm and metabolic pathways in a heme-dependent manner. Integral component of the complex transcription machinery that governs circadian rhythmicity and forms a critical negative limb of the circadian clock by directly repressing the expression of core clock components BMAL1 and CLOCK. Also regulates genes involved in metabolic functions, including lipid metabolism and the inflammatory response. Acts as a receptor for heme which stimulates its interaction with the NCOR1/HDAC3 corepressor complex, enhancing transcriptional repression. Recognizes two classes of DNA response elements within the promoter of its target genes and can bind to DNA as either monomers or homodimers, depending on the nature of the response element. Binds as a monomer to a response element composed of the consensus half-site motif 5'-[A/G]GGTCA-3' preceded by an A/T-rich 5' sequence (RevRE), or as a homodimer to a direct repeat of the core motif spaced by two nuclegotides (RevDR-2). Acts as a potent competitive repressor of ROR alpha (RORA) function and also negatively regulates the expression of NR1D1. Regulates lipid and energy homeostasis in the skeletal muscle via repression of genes involved in lipid metabolism and myogenesis including: CD36, FABP3, FABP4, UCP3, SCD1 and MSTN. Regulates hepatic lipid metabolism via the repression of APOC3. Represses gene expression at a distance in macrophages by inhibiting the transcription of enhancer-derived RNAs (eRNAs). In addition to its activity as a repressor, can also act as a transcriptional activator. Acts as a transcriptional activator of the sterol regulatory element-binding protein 1 (SREBF1) and the inflammatory mediator interleukin-6 (IL6) in the skeletal muscle. Plays a role in the regulation of circadian sleep/wake cycle; essential for maintaining wakefulness during the dark phase or active period. Key regulator of skeletal muscle mitochondrial function; negatively regulates the skeletal muscle expression of core clock genes and genes involved in mitochondrial biogenesis, fatty acid beta-oxidation and lipid metabolism. May play a role in the circadian control of neutrophilic inflammation in the lung. This chain is Nuclear receptor subfamily 1 group D member 2, found in Homo sapiens (Human).